We begin with the raw amino-acid sequence, 149 residues long: 3-dehydroquinate dehydratase (149 aa).

Tyr-26 acts as the Proton acceptor in catalysis. The substrate site is built by Asn-77, His-83, and Asp-90. Catalysis depends on His-103, which acts as the Proton donor. Substrate is bound by residues 104–105 (LS) and Arg-114.

It belongs to the type-II 3-dehydroquinase family. Homododecamer.

It carries out the reaction 3-dehydroquinate = 3-dehydroshikimate + H2O. It participates in metabolic intermediate biosynthesis; chorismate biosynthesis; chorismate from D-erythrose 4-phosphate and phosphoenolpyruvate: step 3/7. Its function is as follows. Catalyzes a trans-dehydration via an enolate intermediate. This Haemophilus influenzae (strain PittEE) protein is 3-dehydroquinate dehydratase.